We begin with the raw amino-acid sequence, 486 residues long: FAD-dependent oxidoreductase domain-containing protein 1 (486 aa).

Residues 66-86 (VVVVGGGVLGLSVAYWLKQLE) form a helical membrane-spanning segment.

Associates with components of the mitochondrial respiratory chain complex I. The cofactor is FAD.

It localises to the mitochondrion inner membrane. Functionally, required for the assembly of the mitochondrial membrane respiratory chain NADH dehydrogenase (Complex I). Involved in mid-late stages of complex I assembly. The sequence is that of FAD-dependent oxidoreductase domain-containing protein 1 (FOXRED1) from Macaca fascicularis (Crab-eating macaque).